The following is a 141-amino-acid chain: HTH-type transcriptional repressor NsrR (141 aa).

The 128-residue stretch at 2–129 (QLTSFTDYGL…DSHTLADMVE (128 aa)) folds into the HTH rrf2-type domain. Residues 28 to 51 (ISEVTEVYGVSRNHMVKIINQLSR) constitute a DNA-binding region (H-T-H motif). [2Fe-2S] cluster contacts are provided by Cys91, Cys96, and Cys102.

The cofactor is [2Fe-2S] cluster.

Its function is as follows. Nitric oxide-sensitive repressor of genes involved in protecting the cell against nitrosative stress. May require iron for activity. In Serratia proteamaculans (strain 568), this protein is HTH-type transcriptional repressor NsrR.